Reading from the N-terminus, the 1807-residue chain is Triacetic acid lactone synthase cle1 (1807 aa).

Positions 107 to 280 constitute a Starter acyltransferase (SAT) domain; the sequence is LAPLTVIIHI…ANVPVNGRYH (174 aa). The Ketosynthase family 3 (KS3) domain occupies 385–795; it reads DTSIAIIGAA…GNNTAIIICQ (411 aa). Residues cysteine 540, histidine 675, and histidine 718 each act as for beta-ketoacyl synthase activity in the active site. The 258-residue stretch at 919-1176 folds into the Malonyl-CoA:ACP transacylase (MAT) domain; that stretch reads SKAVYDSSYH…LGPCIWLEAG (258 aa). The segment at 1272-1398 is N-terminal hotdog fold; sequence PVIDGLISLE…GTVIVDDERT (127 aa). One can recognise a PKS/mFAS DH domain in the interval 1272-1573; it reads PVIDGLISLE…FIRTSTSALQ (302 aa). Histidine 1304 serves as the catalytic Proton acceptor; for dehydratase activity. Residues 1416 to 1573 are C-terminal hotdog fold; it reads TVFSAPRGVA…FIRTSTSALQ (158 aa). Aspartate 1475 acts as the Proton donor; for dehydratase activity in catalysis. The Carrier 1 domain occupies 1605–1679; that stretch reads ANVWSLTVNL…IICERITAQT (75 aa). The residue at position 1639 (serine 1639) is an O-(pantetheine 4'-phosphoryl)serine. Residues 1690-1720 are disordered; sequence GNSTSNTTSSSSQCTPSSSFESDSDTQATEL. Over residues 1692-1710 the composition is skewed to low complexity; sequence STSNTTSSSSQCTPSSSFE. In terms of domain architecture, Carrier 2 spans 1721–1797; the sequence is SLSAPTMEKV…DLHALVMRRG (77 aa). An O-(pantetheine 4'-phosphoryl)serine modification is found at serine 1757.

Pantetheine 4'-phosphate is required as a cofactor.

It participates in secondary metabolite biosynthesis; terpenoid biosynthesis. In terms of biological role, non-reducing polyketide synthase; part of the cluster A that mediates the biosynthesis of chevalone E and its oxidized derivatives that possess a unique five-membered lactone ring and can synergistically enhance the cytotoxicity of doxorubicin (DOX) in breast cancer cells. Within the pathway, cle1 takes part to the biosynthesis of the molecular scaffold via the synthesis the alpha-pyrone triacetic acid lactone (TAL) from one molecule of acetyl-CoA and two molecules of malonyl-CoA. The molecular scaffold is commonly biosynthesized by a series of enzymes including the non-reducing polyketide synthase (NR-PKS) cle1 that produces the alpha-pyrone triacetic acid lactone (TAL); The membrane-bound prenyltransferase cle5 that accepts TAL as its substrate to perform a C-3 geranylgeranylation reaction, in which the pathway-dedicated GGPS cle6 is required to provide GGPP, the other substrate of cle5; the FAD-dependent monooxygenase Cle3 that forms an (S)-epoxide ring at the terminal olefin of the geranylgeranyl group; and the terpene cyclase Cle7 that catalyzes the cyclization of the prenyl group that yields the pentacyclic pathway intermediate chevalone E. Chevalone E can derivatize into seven new oxidized analogs by the cytochrome P450 monooxygenases cle2 (acting at C-20) and cle4 (acting at C-11 and C-12). The protein is Triacetic acid lactone synthase cle1 of Aspergillus versicolor.